The following is a 118-amino-acid chain: Large ribosomal subunit protein bL20 (118 aa).

This sequence belongs to the bacterial ribosomal protein bL20 family.

In terms of biological role, binds directly to 23S ribosomal RNA and is necessary for the in vitro assembly process of the 50S ribosomal subunit. It is not involved in the protein synthesizing functions of that subunit. In Synechococcus sp. (strain JA-2-3B'a(2-13)) (Cyanobacteria bacterium Yellowstone B-Prime), this protein is Large ribosomal subunit protein bL20.